We begin with the raw amino-acid sequence, 444 residues long: Alpha-(1,3)-fucosyltransferase B (444 aa).

Topologically, residues 1 to 6 (MRLAQR) are cytoplasmic. A helical; Signal-anchor for type II membrane protein membrane pass occupies residues 7–27 (YGIALVALLMVGATVLFFWSE). Residues 28-444 (NIINYENIKF…GNNCSNSSNT (417 aa)) are Lumenal-facing. N-linked (GlcNAc...) asparagine glycosylation is found at N279, N437, and N440.

This sequence belongs to the glycosyltransferase 10 family.

The protein localises to the golgi apparatus. It is found in the golgi stack membrane. The protein operates within protein modification; protein glycosylation. This chain is Alpha-(1,3)-fucosyltransferase B (FucTB), found in Drosophila melanogaster (Fruit fly).